The chain runs to 156 residues: Fibroblast growth factor 2 (156 aa).

Positions 1 to 9 (MAAGSITTL) are excised as a propeptide. Heparin is bound at residue Asn37. Position 83 is a phosphotyrosine; by TEC (Tyr83). Lys96 participates in a covalent cross-link: Glycyl lysine isopeptide (Lys-Gly) (interchain with G-Cter in SUMO1). The tract at residues 129–145 (KRTGQYKLGSKTGPGQK) is heparin-binding.

This sequence belongs to the heparin-binding growth factors family. In terms of assembly, monomer. Homodimer. Interacts with FGFR1, FGFR2, FGFR3 and FGFR4. Affinity between fibroblast growth factors (FGFs) and their receptors is increased by heparan sulfate glycosaminoglycans that function as coreceptors. Interacts with CSPG4, FGFBP1 and TEC. Found in a complex with FGFBP1, FGF1 and FGF2. Interacts with FGFBP3. Interacts with integrin ITGAV:ITGB3; the interaction is required for FGF2 signaling. Interacts with SNORC (via the extracellular domain). Interacts with glypican GPC3. Post-translationally, phosphorylation at Tyr-83 regulates FGF2 unconventional secretion.

It localises to the secreted. The protein localises to the nucleus. Acts as a ligand for FGFR1, FGFR2, FGFR3 and FGFR4. Also acts as an integrin ligand which is required for FGF2 signaling. Binds to integrin ITGAV:ITGB3. Plays an important role in the regulation of cell survival, cell division, cell differentiation and cell migration. Functions as a potent mitogen in vitro. Can induce angiogenesis. Mediates phosphorylation of ERK1/2 and thereby promotes retinal lens fiber differentiation. In Monodelphis domestica (Gray short-tailed opossum), this protein is Fibroblast growth factor 2 (FGF2).